We begin with the raw amino-acid sequence, 46 residues long: Protein PsbN (46 aa).

Residues 10–30 (LIITILAVTIAFTAVSLYTAF) traverse the membrane as a helical segment.

It belongs to the PsbN family.

It localises to the cellular thylakoid membrane. Functionally, may play a role in photosystem I and II biogenesis. This chain is Protein PsbN, found in Acaryochloris marina (strain MBIC 11017).